Consider the following 431-residue polypeptide: MTTIETTQGLERRVSITVPAETVTTAVRDELKRVAKNARVDGFRKGKVPAQIIEKRFGASVRQDVLNDLLPRHFFDLAFKEKVNLAGRPTFAVENYEEGKDLQFTATFEVYPEIQLQGLENIKVEKPVVEITDADVDNMVEVLRKQQATWAETDNAATKDDRVTIDFVGSIDGEEFQGGKANDFVLAMGQGRMIPGFEDGILGHKAGEQFDIEVTFPEDYHVENLKAKPAKFAITVKKVEVMVLPELTADFIAKFGPNTKTVDDLRAEIRKNMQRELKNALTARVKNQVIDGLIEQNQIDVPFAAVDQEIEVLRNQAAQRFGGNGEQAAQLPRELFEEQAKRRVQVGLLLAEVISSNELKADEEKAKAMIEDIASAYEQPAEVVEYYSKNNELMNNIRNVVLEEQAIDAVLAKAQVTEKASSFDEVMNPQA.

One can recognise a PPIase FKBP-type domain in the interval 160–245 (DDRVTIDFVG…VKKVEVMVLP (86 aa)).

It belongs to the FKBP-type PPIase family. Tig subfamily.

The protein resides in the cytoplasm. The enzyme catalyses [protein]-peptidylproline (omega=180) = [protein]-peptidylproline (omega=0). Involved in protein export. Acts as a chaperone by maintaining the newly synthesized protein in an open conformation. Functions as a peptidyl-prolyl cis-trans isomerase. The polypeptide is Trigger factor (Mannheimia succiniciproducens (strain KCTC 0769BP / MBEL55E)).